Consider the following 365-residue polypeptide: uncharacterized protein (365 aa).

Composition is skewed to basic and acidic residues over residues 1-27 (MDNVQEHDPDTQEHNNETQNHKQEDHS) and 315-339 (AKDDEQYAKRLAKEEEERGKKETPK). Disordered stretches follow at residues 1–31 (MDNVQEHDPDTQEHNNETQNHKQEDHSNSYQ) and 308–365 (KEEK…CLIS). The span at 340-353 (KASNTPRRNKSNTQ) shows a compositional bias: polar residues.

To yeast YGL082w. In terms of assembly, interacts with sad1.

It localises to the cytoplasm. This is an uncharacterized protein from Schizosaccharomyces pombe (strain 972 / ATCC 24843) (Fission yeast).